A 307-amino-acid chain; its full sequence is MDVAVESRVEPVGRIGVSRKVKAYISLTKPRVVELLLVTTVPTMILAARGIPNLWLVLATVVGGYMSAGSAGAFNCYIDRDIDRVMRRTKNRPLVTGELSDREALVFAWALGVASVLVLGFFTNWLAAGLSVAAILIYVVFYTLILKRRTTQNIVWGGVAGCMPVLIGWAVVTNSVGWAPVILFGVIFLWTPPHYWPLSMKYREDYKDAGVPMLAVVRGRAVVGLQVVLYAWAMVACSLLLIPVARMGVLYTAVALVAGGWFLYESHRLYNLAICHATVSPMRVFHGSIAYLTLIFLAVAIDPLLPF.

8 consecutive transmembrane segments (helical) span residues 32 to 52, 54 to 74, 105 to 125, 126 to 146, 169 to 189, 222 to 242, 244 to 264, and 287 to 307; these read VVEL…RGIP, LWLV…AGAF, LVFA…FTNW, LAAG…TLIL, WAVV…VIFL, VVGL…LLLI, VARM…WFLY, and GSIA…LLPF.

Belongs to the UbiA prenyltransferase family. Protoheme IX farnesyltransferase subfamily.

The protein localises to the cell membrane. The enzyme catalyses heme b + (2E,6E)-farnesyl diphosphate + H2O = Fe(II)-heme o + diphosphate. Its pathway is porphyrin-containing compound metabolism; heme O biosynthesis; heme O from protoheme: step 1/1. Its function is as follows. Converts heme B (protoheme IX) to heme O by substitution of the vinyl group on carbon 2 of heme B porphyrin ring with a hydroxyethyl farnesyl side group. This chain is Protoheme IX farnesyltransferase, found in Leifsonia xyli subsp. xyli (strain CTCB07).